The chain runs to 278 residues: Inner membrane mitoribosome receptor MBA1, mitochondrial (278 aa).

The N-terminal 33 residues, 1-33, are a transit peptide targeting the mitochondrion; it reads MSVLRSTCLFFPPRSLLISFNKRRLFSTSRLIL.

Interacts with OXA1 and MDM38. Binds to mitoribosomes in order to recruit them to the mitochondrial inner membrane.

The protein localises to the mitochondrion inner membrane. In terms of biological role, mitochondrial inner membrane-associated mitoribosome receptor that spatially aligns the mitoribosome exit tunnel with the membrane insertion machinery and allows cotranslational protein membrane insertion. The polypeptide is Inner membrane mitoribosome receptor MBA1, mitochondrial (Saccharomyces cerevisiae (strain ATCC 204508 / S288c) (Baker's yeast)).